A 323-amino-acid polypeptide reads, in one-letter code: Probable cell division protein WhiA (323 aa).

Residues 275 to 309 (TLKELGEMLTTGQVSKSGINHRLRKLDQIAERLRS) constitute a DNA-binding region (H-T-H motif).

It belongs to the WhiA family.

Functionally, involved in cell division and chromosome segregation. The chain is Probable cell division protein WhiA from Listeria welshimeri serovar 6b (strain ATCC 35897 / DSM 20650 / CCUG 15529 / CIP 8149 / NCTC 11857 / SLCC 5334 / V8).